A 513-amino-acid polypeptide reads, in one-letter code: Maturase K (513 aa).

This sequence belongs to the intron maturase 2 family. MatK subfamily.

The protein localises to the plastid. The protein resides in the chloroplast. In terms of biological role, usually encoded in the trnK tRNA gene intron. Probably assists in splicing its own and other chloroplast group II introns. The sequence is that of Maturase K from Cynodon dactylon (Bermuda grass).